The primary structure comprises 304 residues: tRNA dimethylallyltransferase (304 aa).

2-9 (GPTASGKT) lines the ATP pocket. A substrate-binding site is contributed by 4–9 (TASGKT). Residues 28-31 (DSAL) form an interaction with substrate tRNA region.

Belongs to the IPP transferase family. As to quaternary structure, monomer. Mg(2+) serves as cofactor.

The catalysed reaction is adenosine(37) in tRNA + dimethylallyl diphosphate = N(6)-dimethylallyladenosine(37) in tRNA + diphosphate. Its function is as follows. Catalyzes the transfer of a dimethylallyl group onto the adenine at position 37 in tRNAs that read codons beginning with uridine, leading to the formation of N6-(dimethylallyl)adenosine (i(6)A). The protein is tRNA dimethylallyltransferase of Blochmanniella pennsylvanica (strain BPEN).